The chain runs to 773 residues: Membrane-bound aldehyde dehydrogenase [pyrroloquinoline-quinone] (773 aa).

A signal peptide (tat-type signal) is located at residues M1–A44.

The cofactor is pyrroloquinoline quinone. Predicted to be exported by the Tat system. The position of the signal peptide cleavage has been experimentally proven.

It is found in the cell inner membrane. The catalysed reaction is an aldehyde + a quinone + H2O = a quinol + a carboxylate + H(+). The protein is Membrane-bound aldehyde dehydrogenase [pyrroloquinoline-quinone] of Gluconacetobacter polyoxogenes (Acetobacter polyoxogenes).